The primary structure comprises 445 residues: Eukaryotic peptide chain release factor subunit 1 (445 aa).

This sequence belongs to the eukaryotic release factor 1 family. Heterodimer of two subunits, one of which binds GTP.

The protein resides in the cytoplasm. Its function is as follows. Directs the termination of nascent peptide synthesis (translation) in response to the termination codon UGA. In Stylonchia UAA and UAG codes for glutamine. This Stylonychia mytilus (Ciliate) protein is Eukaryotic peptide chain release factor subunit 1 (ERF1).